The chain runs to 488 residues: Aspartyl/glutamyl-tRNA(Asn/Gln) amidotransferase subunit B (488 aa).

The protein belongs to the GatB/GatE family. GatB subfamily. As to quaternary structure, heterotrimer of A, B and C subunits.

It carries out the reaction L-glutamyl-tRNA(Gln) + L-glutamine + ATP + H2O = L-glutaminyl-tRNA(Gln) + L-glutamate + ADP + phosphate + H(+). The catalysed reaction is L-aspartyl-tRNA(Asn) + L-glutamine + ATP + H2O = L-asparaginyl-tRNA(Asn) + L-glutamate + ADP + phosphate + 2 H(+). Allows the formation of correctly charged Asn-tRNA(Asn) or Gln-tRNA(Gln) through the transamidation of misacylated Asp-tRNA(Asn) or Glu-tRNA(Gln) in organisms which lack either or both of asparaginyl-tRNA or glutaminyl-tRNA synthetases. The reaction takes place in the presence of glutamine and ATP through an activated phospho-Asp-tRNA(Asn) or phospho-Glu-tRNA(Gln). The sequence is that of Aspartyl/glutamyl-tRNA(Asn/Gln) amidotransferase subunit B from Ralstonia pickettii (strain 12J).